The primary structure comprises 681 residues: MKKKANEEKAPKRAKQEAKTEATQENKAKESNKENKNNKAKEGKIKEAKTKESKVKETAKEPIPVKKLSFNEALEELFANSLSDCVSYESIIQISAKVPTLAQIKKIKELCQKYQKKLVSSSEYAKKLNAIDKIKNTEEKQKVLDEELEDGYDFLKEKDFLEWSRSDSPVRMYLREMGDIKLLSKDEEIELSKQIRLGEDIILDAICSVPYLIDFIYAYKDALINRERRVKELFRSFDDDDENSVSDPKKDDDSEEDEENEERKKVVSEKDKKRVEKVQESFKALDKAKKEWLKALEAPIDEKEDELVRSLTLAYKRQTLKDRLYDLEPTSKLINELVKTMETTLKSGDGFEKELKRLEYKLPLFNDTLIANHKKILANITNMTKEDIIAQVPEATMVSVYMDLKKLFLTKEASEEGFDLAPNKLKEILEQIKRGKLISDRAKNKMAKSNLRLVVSIAKRFTSRGLPFLDLIQEGNIGLMKAVDKFEHEKGFKFSTYATWWIKQAISRAIADQARTIRIPIHMIDTINRINKVMRKHIQETGKEPDLEVVAEEVGLSLDKVKNVIKVTKEPISLETPVGNDDDGKFGDFVEDKNIVSSIDHIMREDLKAQIESVLDQLNEREKAVIRMRFGLLDDESDRTLEEIGKELNVTRERVRQIESSAIKKLRSPQYGRILRNYLRI.

Disordered regions lie at residues 1–60 (MKKK…ETAK) and 239–270 (DDDE…VSEK). The segment covering 261–270 (EERKKVVSEK) has biased composition (basic and acidic residues). The sigma-70 factor domain-2 stretch occupies residues 446 to 516 (MAKSNLRLVV…SRAIADQART (71 aa)). Residues 470–473 (DLIQ) carry the Interaction with polymerase core subunit RpoC motif. Residues 525–601 (DTINRINKVM…DKNIVSSIDH (77 aa)) form a sigma-70 factor domain-3 region. Residues 614-668 (VLDQLNEREKAVIRMRFGLLDDESDRTLEEIGKELNVTRERVRQIESSAIKKLRS) form a sigma-70 factor domain-4 region. The H-T-H motif DNA-binding region spans 641 to 660 (LEEIGKELNVTRERVRQIES).

This sequence belongs to the sigma-70 factor family. RpoD/SigA subfamily. As to quaternary structure, interacts transiently with the RNA polymerase catalytic core.

It is found in the cytoplasm. Its function is as follows. Sigma factors are initiation factors that promote the attachment of RNA polymerase to specific initiation sites and are then released. This sigma factor is the primary sigma factor during exponential growth. This Helicobacter pylori (strain J99 / ATCC 700824) (Campylobacter pylori J99) protein is RNA polymerase sigma factor RpoD.